A 494-amino-acid chain; its full sequence is tRNA-2-methylthio-N(6)-dimethylallyladenosine synthase (494 aa).

The MTTase N-terminal domain occupies 4–120 (RSYQVRTFGC…LPVLLERARH (117 aa)). Cysteine 13, cysteine 49, cysteine 83, cysteine 157, cysteine 161, and cysteine 164 together coordinate [4Fe-4S] cluster. The 232-residue stretch at 143–374 (RASHHSAWVS…SLQDEMSWAE (232 aa)) folds into the Radical SAM core domain. Positions 376 to 449 (RAQVGRRVEI…PHHLTADGPL (74 aa)) constitute a TRAM domain. A disordered region spans residues 465 to 494 (RAIAGDTPRPDRPAVSLGMPQLRPSAPAAR).

Belongs to the methylthiotransferase family. MiaB subfamily. As to quaternary structure, monomer. [4Fe-4S] cluster serves as cofactor.

The protein resides in the cytoplasm. The catalysed reaction is N(6)-dimethylallyladenosine(37) in tRNA + (sulfur carrier)-SH + AH2 + 2 S-adenosyl-L-methionine = 2-methylsulfanyl-N(6)-dimethylallyladenosine(37) in tRNA + (sulfur carrier)-H + 5'-deoxyadenosine + L-methionine + A + S-adenosyl-L-homocysteine + 2 H(+). In terms of biological role, catalyzes the methylthiolation of N6-(dimethylallyl)adenosine (i(6)A), leading to the formation of 2-methylthio-N6-(dimethylallyl)adenosine (ms(2)i(6)A) at position 37 in tRNAs that read codons beginning with uridine. The chain is tRNA-2-methylthio-N(6)-dimethylallyladenosine synthase from Parafrankia sp. (strain EAN1pec).